Reading from the N-terminus, the 925-residue chain is Neuropilin-2 (925 aa).

The N-terminal stretch at Met1 to Ser22 is a signal peptide. Residues Gln23–Pro858 are Extracellular-facing. Cystine bridges form between Cys28-Cys55, Cys83-Cys105, and Cys149-Cys175. 2 CUB domains span residues Cys28–Phe142 and Cys149–Val267. 2 N-linked (GlcNAc...) asparagine glycosylation sites follow: Asn152 and Asn157. Ca(2+) contacts are provided by Glu197, Asp211, and Asp252. An intrachain disulfide couples Cys208 to Cys230. Cystine bridges form between Cys277-Cys427 and Cys434-Cys592. F5/8 type C domains lie at Cys277 to Cys427 and Cys434 to Cys592. A compositionally biased stretch (polar residues) spans Ser297–Arg310. Residues Ser297–Gly317 are disordered. Residues Val601–Glu621 form a disordered region. Asn629 is a glycosylation site (N-linked (GlcNAc...) asparagine). Residues Ser642–Glu802 form the MAM domain. The segment covering Tyr820–Gly830 has biased composition (acidic residues). Residues Tyr820 to Glu849 are disordered. N-linked (GlcNAc...) asparagine glycosylation is found at Asn833 and Asn834. Over residues Ser835–Ser846 the composition is skewed to low complexity. The chain crosses the membrane as a helical span at residues Ile859 to Tyr883. Over Cys884–Ala925 the chain is Cytoplasmic.

This sequence belongs to the neuropilin family. As to quaternary structure, heterodimer with NRP1. Binds PLXNB1. As to expression, found in certain neuronal populations of the CNS, including dorsal root ganglia, and in other non-neuronal tissues including mesenchymal tissue lining in the ribs.

The protein resides in the membrane. Functionally, high affinity receptor for semaphorins 3C, 3F, VEGF-165 and VEGF-145 isoforms of VEGF, and the PLGF-2 isoform of PGF. The polypeptide is Neuropilin-2 (Nrp2) (Rattus norvegicus (Rat)).